Reading from the N-terminus, the 297-residue chain is ER membrane protein complex subunit 2 (297 aa).

Residue A2 is modified to N-acetylalanine. TPR repeat units lie at residues 87-120, 155-188, and 192-225; these read HRVKRLTGMRFEAMERYDDAIQLYDRILQEDPTN, QEAWHELAELYINEHDYAKAAFCLEELMMTNPYN, and CQQYAEVKYTQGGLENLELSRKYFAQALKLNNRN. N6-acetyllysine is present on K255.

The protein belongs to the EMC2 family. As to quaternary structure, component of the ER membrane protein complex (EMC).

Its subcellular location is the endoplasmic reticulum membrane. Its function is as follows. Part of the endoplasmic reticulum membrane protein complex (EMC) that enables the energy-independent insertion into endoplasmic reticulum membranes of newly synthesized membrane proteins. Preferentially accommodates proteins with transmembrane domains that are weakly hydrophobic or contain destabilizing features such as charged and aromatic residues. Involved in the cotranslational insertion of multi-pass membrane proteins in which stop-transfer membrane-anchor sequences become ER membrane spanning helices. It is also required for the post-translational insertion of tail-anchored/TA proteins in endoplasmic reticulum membranes. By mediating the proper cotranslational insertion of N-terminal transmembrane domains in an N-exo topology, with translocated N-terminus in the lumen of the ER, controls the topology of multi-pass membrane proteins like the G protein-coupled receptors. By regulating the insertion of various proteins in membranes, it is indirectly involved in many cellular processes. In Bos taurus (Bovine), this protein is ER membrane protein complex subunit 2.